A 229-amino-acid polypeptide reads, in one-letter code: Indole-3-glycerol phosphate synthase (229 aa).

It belongs to the TrpC family.

The catalysed reaction is 1-(2-carboxyphenylamino)-1-deoxy-D-ribulose 5-phosphate + H(+) = (1S,2R)-1-C-(indol-3-yl)glycerol 3-phosphate + CO2 + H2O. It functions in the pathway amino-acid biosynthesis; L-tryptophan biosynthesis; L-tryptophan from chorismate: step 4/5. The chain is Indole-3-glycerol phosphate synthase from Pyrococcus abyssi (strain GE5 / Orsay).